We begin with the raw amino-acid sequence, 520 residues long: Peptide chain release factor 3 (520 aa).

The 270-residue stretch at 8–277 (ESRKTFAIIS…FAPMPNARQT (270 aa)) folds into the tr-type G domain. GTP is bound by residues 17–24 (SHPDAGKT), 85–89 (DTPGH), and 139–142 (NKLD).

This sequence belongs to the TRAFAC class translation factor GTPase superfamily. Classic translation factor GTPase family. PrfC subfamily.

The protein resides in the cytoplasm. Its function is as follows. Increases the formation of ribosomal termination complexes and stimulates activities of RF-1 and RF-2. It binds guanine nucleotides and has strong preference for UGA stop codons. It may interact directly with the ribosome. The stimulation of RF-1 and RF-2 is significantly reduced by GTP and GDP, but not by GMP. This chain is Peptide chain release factor 3, found in Staphylococcus aureus (strain JH1).